The primary structure comprises 180 residues: Protein GrpE (180 aa).

The protein belongs to the GrpE family. Homodimer.

It localises to the cytoplasm. In terms of biological role, participates actively in the response to hyperosmotic and heat shock by preventing the aggregation of stress-denatured proteins, in association with DnaK and GrpE. It is the nucleotide exchange factor for DnaK and may function as a thermosensor. Unfolded proteins bind initially to DnaJ; upon interaction with the DnaJ-bound protein, DnaK hydrolyzes its bound ATP, resulting in the formation of a stable complex. GrpE releases ADP from DnaK; ATP binding to DnaK triggers the release of the substrate protein, thus completing the reaction cycle. Several rounds of ATP-dependent interactions between DnaJ, DnaK and GrpE are required for fully efficient folding. This chain is Protein GrpE, found in Picrophilus torridus (strain ATCC 700027 / DSM 9790 / JCM 10055 / NBRC 100828 / KAW 2/3).